A 158-amino-acid polypeptide reads, in one-letter code: Small ribosomal subunit protein uS19 (158 aa).

The protein belongs to the universal ribosomal protein uS19 family.

In terms of biological role, protein S19 forms a complex with S13 that binds strongly to the 16S ribosomal RNA. The chain is Small ribosomal subunit protein uS19 from Pyrobaculum neutrophilum (strain DSM 2338 / JCM 9278 / NBRC 100436 / V24Sta) (Thermoproteus neutrophilus).